We begin with the raw amino-acid sequence, 254 residues long: Triosephosphate isomerase 2 (254 aa).

9 to 11 (NMK) is a substrate binding site. The active-site Electrophile is histidine 96. Glutamate 168 (proton acceptor) is an active-site residue. Residues glycine 174 and serine 212 each contribute to the substrate site.

Belongs to the triosephosphate isomerase family. As to quaternary structure, homodimer.

It is found in the cytoplasm. It carries out the reaction D-glyceraldehyde 3-phosphate = dihydroxyacetone phosphate. Its pathway is polyol metabolism; glycerol degradation. Involved in the glycerol metabolism. Catalyzes stereospecifically the conversion of dihydroxyacetone phosphate (DHAP) to D-glyceraldehyde-3-phosphate (G3P). The polypeptide is Triosephosphate isomerase 2 (Listeria innocua serovar 6a (strain ATCC BAA-680 / CLIP 11262)).